A 621-amino-acid polypeptide reads, in one-letter code: Complex I assembly factor ACAD9, mitochondrial (621 aa).

Residues 1-37 constitute a mitochondrion transit peptide; the sequence is MSGCGLFLRTTAAARACRGLVVSTANRRLLRTSPPVR. Position 41 is an N6-acetyllysine (lysine 41). The residue at position 92 (lysine 92) is an N6-succinyllysine. Catalysis depends on glutamate 426, which acts as the Proton acceptor. At threonine 478 the chain carries Phosphothreonine. Residue lysine 521 is modified to N6-acetyllysine; alternate. Lysine 521 is modified (N6-succinyllysine; alternate).

The protein belongs to the acyl-CoA dehydrogenase family. Homodimer. Interacts with NDUFAF1 and ECSIT. Part of the mitochondrial complex I assembly/MCIA complex that comprises at least the core subunits TMEM126B, NDUFAF1, ECSIT and ACAD9 and complement subunits such as COA1 and TMEM186. Interacts with TMEM70 and TMEM242. It depends on FAD as a cofactor. In terms of tissue distribution, ubiquitously expressed in most normal human tissues and cancer cell lines with high level of expression in heart, skeletal muscles, brain, kidney and liver. In the cerebellum uniquely expressed in the granular layer (at protein level).

It localises to the mitochondrion inner membrane. It carries out the reaction eicosanoyl-CoA + oxidized [electron-transfer flavoprotein] + H(+) = (2E)-eicosenoyl-CoA + reduced [electron-transfer flavoprotein]. The catalysed reaction is octadecanoyl-CoA + oxidized [electron-transfer flavoprotein] + H(+) = (2E)-octadecenoyl-CoA + reduced [electron-transfer flavoprotein]. It catalyses the reaction oxidized [electron-transfer flavoprotein] + hexadecanoyl-CoA + H(+) = (2E)-hexadecenoyl-CoA + reduced [electron-transfer flavoprotein]. The enzyme catalyses decanoyl-CoA + oxidized [electron-transfer flavoprotein] + H(+) = (2E)-decenoyl-CoA + reduced [electron-transfer flavoprotein]. It carries out the reaction nonanoyl-CoA + oxidized [electron-transfer flavoprotein] + H(+) = (2E)-nonenoyl-CoA + reduced [electron-transfer flavoprotein]. The catalysed reaction is pentadecanoyl-CoA + oxidized [electron-transfer flavoprotein] + H(+) = (2E)-pentadecenoyl-CoA + reduced [electron-transfer flavoprotein]. It catalyses the reaction undecanoyl-CoA + oxidized [electron-transfer flavoprotein] + H(+) = trans-2-undecenoyl-CoA + reduced [electron-transfer flavoprotein]. The enzyme catalyses (9Z)-hexadecenoyl-CoA + oxidized [electron-transfer flavoprotein] + H(+) = (2E,9Z)-hexadecadienoyl-CoA + reduced [electron-transfer flavoprotein]. It carries out the reaction heptadecanoyl-CoA + oxidized [electron-transfer flavoprotein] + H(+) = trans-2-heptadecenoyl-CoA + reduced [electron-transfer flavoprotein]. The catalysed reaction is (9E)-octadecenoyl-CoA + oxidized [electron-transfer flavoprotein] + H(+) = (2E,9E)-octadecadienoyl-CoA + reduced [electron-transfer flavoprotein]. It catalyses the reaction oxidized [electron-transfer flavoprotein] + (9Z)-octadecenoyl-CoA + H(+) = (2E,9Z)-octadecadienoyl-CoA + reduced [electron-transfer flavoprotein]. The enzyme catalyses (9Z,12Z)-octadecadienoyl-CoA + oxidized [electron-transfer flavoprotein] + H(+) = (2E,9Z,12Z)-octadecatrienoyl-CoA + reduced [electron-transfer flavoprotein]. It carries out the reaction (4Z,7Z,10Z,13Z,16Z,19Z)-docosahexaenoyl-CoA + oxidized [electron-transfer flavoprotein] + H(+) = (2E,4Z,7Z,10Z,13Z,16Z,19Z)-docosaheptaenoyl-CoA + reduced [electron-transfer flavoprotein]. The catalysed reaction is tetradecanoyl-CoA + oxidized [electron-transfer flavoprotein] + H(+) = (2E)-tetradecenoyl-CoA + reduced [electron-transfer flavoprotein]. In terms of biological role, as part of the MCIA complex, primarily participates in the assembly of the mitochondrial complex I and therefore plays a role in oxidative phosphorylation. This moonlighting protein also has a dehydrogenase activity toward a broad range of substrates with greater specificity for long-chain unsaturated acyl-CoAs. However, in vivo, it does not seem to play a primary role in fatty acid oxidation. In addition, the function in complex I assembly is independent of the dehydrogenase activity of the protein. The polypeptide is Complex I assembly factor ACAD9, mitochondrial (Homo sapiens (Human)).